The primary structure comprises 145 residues: Hemoglobin subunit beta (145 aa).

Residues 1 to 145 enclose the Globin domain; that stretch reads MLTAEEKAAV…VANALAHRYH (145 aa). A Phosphothreonine modification is found at Thr-11. The residue at position 43 (Ser-43) is a Phosphoserine. Lys-58 bears the N6-acetyllysine mark. Position 62 (His-62) interacts with heme b. Lys-81 carries the post-translational modification N6-acetyllysine. His-91 is a heme b binding site. The residue at position 92 (Cys-92) is an S-nitrosocysteine.

This sequence belongs to the globin family. In terms of assembly, heterotetramer of two alpha chains and two beta chains. Red blood cells.

Involved in oxygen transport from the lung to the various peripheral tissues. This chain is Hemoglobin subunit beta (HBB), found in Bos mutus grunniens (Wild yak).